The chain runs to 89 residues: Small ribosomal subunit protein uS15 (89 aa).

Residues 1–21 show a composition bias toward basic and acidic residues; that stretch reads MALTTEEKKQVLSEYGLHETD. Residues 1-24 form a disordered region; it reads MALTTEEKKQVLSEYGLHETDTGS.

Belongs to the universal ribosomal protein uS15 family. In terms of assembly, part of the 30S ribosomal subunit. Forms a bridge to the 50S subunit in the 70S ribosome, contacting the 23S rRNA.

One of the primary rRNA binding proteins, it binds directly to 16S rRNA where it helps nucleate assembly of the platform of the 30S subunit by binding and bridging several RNA helices of the 16S rRNA. Its function is as follows. Forms an intersubunit bridge (bridge B4) with the 23S rRNA of the 50S subunit in the ribosome. The chain is Small ribosomal subunit protein uS15 from Rhodococcus opacus (strain B4).